The primary structure comprises 124 residues: Large ribosomal subunit protein bL12 (124 aa).

The protein belongs to the bacterial ribosomal protein bL12 family. In terms of assembly, homodimer. Part of the ribosomal stalk of the 50S ribosomal subunit. Forms a multimeric L10(L12)X complex, where L10 forms an elongated spine to which 2 to 4 L12 dimers bind in a sequential fashion. Binds GTP-bound translation factors.

Forms part of the ribosomal stalk which helps the ribosome interact with GTP-bound translation factors. Is thus essential for accurate translation. The polypeptide is Large ribosomal subunit protein bL12 (Cupriavidus metallidurans (strain ATCC 43123 / DSM 2839 / NBRC 102507 / CH34) (Ralstonia metallidurans)).